A 608-amino-acid chain; its full sequence is Kelch-like protein 10 (608 aa).

Positions 39–106 (CDVVIKVNGF…AYTRTVPITP (68 aa)) constitute a BTB domain. Kelch repeat units lie at residues 292–339 (ILFA…YLKG), 340–386 (YVYI…VLGN), 388–433 (IYAM…TLYG), 434–480 (KVYI…AYGE), 481–527 (HVYA…VVDD), and 529–574 (LFVV…VVPG). The residue at position 501 (Ser-501) is a Phosphoserine.

As to quaternary structure, self-associates. Interacts with CUL3; indicative for the participation in an E3 ubiquitin ligase complex.

Its subcellular location is the cytoplasm. It functions in the pathway protein modification; protein ubiquitination. Functionally, may be a substrate-specific adapter of a CUL3-based E3 ubiquitin-protein ligase complex which mediates the ubiquitination and subsequent proteasomal degradation of target proteins during spermatogenesis. This is Kelch-like protein 10 (KLHL10) from Homo sapiens (Human).